We begin with the raw amino-acid sequence, 185 residues long: Probable RNA 2'-phosphotransferase (185 aa).

The protein belongs to the KptA/TPT1 family.

In terms of biological role, removes the 2'-phosphate from RNA via an intermediate in which the phosphate is ADP-ribosylated by NAD followed by a presumed transesterification to release the RNA and generate ADP-ribose 1''-2''-cyclic phosphate (APPR&gt;P). May function as an ADP-ribosylase. The protein is Probable RNA 2'-phosphotransferase of Rhizobium rhizogenes (strain K84 / ATCC BAA-868) (Agrobacterium radiobacter).